A 261-amino-acid polypeptide reads, in one-letter code: Methyl jasmonate esterase 1 (261 aa).

Residues 8–251 (FVLVHGACHG…MFSKPLDLCA (244 aa)) enclose the AB hydrolase-1 domain. Serine 82 acts as the Acyl-ester intermediate in catalysis. Catalysis depends on charge relay system residues aspartate 211 and histidine 239.

It belongs to the AB hydrolase superfamily. Methylesterase family. In terms of assembly, homodimer.

The catalysed reaction is methyl (-)-jasmonate + H2O = jasmonate + methanol + H(+). It catalyses the reaction methyl salicylate + H2O = salicylate + methanol + H(+). It participates in plant hormone biosynthesis. It functions in the pathway lipid metabolism; oxylipin biosynthesis. In terms of biological role, methylesterase that catalyzes the hydrolysis of methyl jasmonate (MeJA) into jasmonate (JA). Can also use methyl salicylate (MeSA) as substrate with a lower efficiency. This is Methyl jasmonate esterase 1 from Vitis vinifera (Grape).